The primary structure comprises 513 residues: ATP synthase subunit alpha (513 aa).

169–176 (GDRQTGKT) contributes to the ATP binding site.

The protein belongs to the ATPase alpha/beta chains family. As to quaternary structure, F-type ATPases have 2 components, CF(1) - the catalytic core - and CF(0) - the membrane proton channel. CF(1) has five subunits: alpha(3), beta(3), gamma(1), delta(1), epsilon(1). CF(0) has three main subunits: a(1), b(2) and c(9-12). The alpha and beta chains form an alternating ring which encloses part of the gamma chain. CF(1) is attached to CF(0) by a central stalk formed by the gamma and epsilon chains, while a peripheral stalk is formed by the delta and b chains.

The protein resides in the cell inner membrane. It catalyses the reaction ATP + H2O + 4 H(+)(in) = ADP + phosphate + 5 H(+)(out). Produces ATP from ADP in the presence of a proton gradient across the membrane. The alpha chain is a regulatory subunit. This is ATP synthase subunit alpha from Histophilus somni (strain 2336) (Haemophilus somnus).